Consider the following 195-residue polypeptide: 3-isopropylmalate dehydratase small subunit (195 aa).

This sequence belongs to the LeuD family. LeuD type 1 subfamily. As to quaternary structure, heterodimer of LeuC and LeuD.

It carries out the reaction (2R,3S)-3-isopropylmalate = (2S)-2-isopropylmalate. The protein operates within amino-acid biosynthesis; L-leucine biosynthesis; L-leucine from 3-methyl-2-oxobutanoate: step 2/4. Catalyzes the isomerization between 2-isopropylmalate and 3-isopropylmalate, via the formation of 2-isopropylmaleate. In Parafrankia sp. (strain EAN1pec), this protein is 3-isopropylmalate dehydratase small subunit.